The primary structure comprises 261 residues: Hemin import ATP-binding protein HmuV (261 aa).

Residues 3-239 enclose the ABC transporter domain; sequence LDAADITVKL…AILSQAYGCA (237 aa). Residue 35 to 42 coordinates ATP; the sequence is GPNGSGKT.

The protein belongs to the ABC transporter superfamily. Heme (hemin) importer (TC 3.A.1.14.5) family. In terms of assembly, the complex is composed of two ATP-binding proteins (HmuV), two transmembrane proteins (HmuU) and a solute-binding protein (HmuT).

It localises to the cell inner membrane. Part of the ABC transporter complex HmuTUV involved in hemin import. Responsible for energy coupling to the transport system. This is Hemin import ATP-binding protein HmuV from Roseobacter denitrificans (strain ATCC 33942 / OCh 114) (Erythrobacter sp. (strain OCh 114)).